The following is a 351-amino-acid chain: Dihydroorotate dehydrogenase (quinone) (351 aa).

Residues 61 to 65 (AGLDK) and T85 each bind FMN. K65 contacts substrate. 110–114 (NRMGF) lines the substrate pocket. Residues N139 and N172 each contribute to the FMN site. Residue N172 participates in substrate binding. S175 (nucleophile) is an active-site residue. N177 lines the substrate pocket. FMN contacts are provided by K217 and T245. A substrate-binding site is contributed by 246-247 (NT). FMN contacts are provided by residues G268, G297, and 318–319 (YT).

It belongs to the dihydroorotate dehydrogenase family. Type 2 subfamily. In terms of assembly, monomer. FMN serves as cofactor.

Its subcellular location is the cell membrane. It catalyses the reaction (S)-dihydroorotate + a quinone = orotate + a quinol. The protein operates within pyrimidine metabolism; UMP biosynthesis via de novo pathway; orotate from (S)-dihydroorotate (quinone route): step 1/1. Its function is as follows. Catalyzes the conversion of dihydroorotate to orotate with quinone as electron acceptor. The sequence is that of Dihydroorotate dehydrogenase (quinone) from Xylella fastidiosa (strain 9a5c).